Here is a 1080-residue protein sequence, read N- to C-terminus: Presequence protease 1, chloroplastic/mitochondrial (1080 aa).

Residues M1 to A85 constitute a chloroplast and mitochondrion transit peptide. The residue at position 86 (V86) is an N-acetylvaline. A Zn(2+)-binding site is contributed by H162. The active-site Proton acceptor is E165. Position 166 (H166) interacts with Zn(2+). E240 is an active-site residue. Residue E262 coordinates Zn(2+). A coiled-coil region spans residues E571–T612. A Mg(2+)-binding site is contributed by R705.

It belongs to the peptidase M16 family. PreP subfamily. Homodimer. The cofactor is Zn(2+). It depends on Mg(2+) as a cofactor. In terms of tissue distribution, expressed only in siliques and flowers.

It localises to the plastid. The protein localises to the chloroplast stroma. The protein resides in the mitochondrion matrix. Inactive in the absence of MgCl(2) and CaCl(2) and full activation at 10 mM concentrations of either ion. Completely inhibited by the metal chelator orthophenanthroline, but not affected by phenylmethylsulfonyl fluoride (PMSF) or N-ethylmaleimide (NEM). Functionally, ATP-independent protease that degrades both mitochondrial and chloroplastic transit peptides after their cleavage. Also degrades other unstructured peptides. Specific for peptides in the range of 10 to 65 residues. Shows a preference for cleavage after small polar residues and before basic residues, with a bias for positively charged amino acid residues. This Arabidopsis thaliana (Mouse-ear cress) protein is Presequence protease 1, chloroplastic/mitochondrial (PREP1).